Reading from the N-terminus, the 383-residue chain is Na(+)/H(+) antiporter NhaA (383 aa).

11 helical membrane passes run 10–30, 56–76, 91–111, 121–141, 150–170, 174–194, 206–226, 254–274, 289–308, 327–347, and 355–375; these read LIGGLILFSAALLAIVVNNSP, LMHWINDGLMAIYFLYIGLEI, IITPAIAAFAGLAMPSLIYLS, GWAIPSATDIAFTLAILALLG, LLVITIAIFDDIAAIAIIAIF, SLSLLSLSLGTLFILAMIICN, VVLGFFAWFCTIKSGVHATLA, PWIIYFILPVFAFANAGISFS, IIWGLFVGKQLGIFSILAVF, GISLLCGIGFTMSLFIGVLAF, and AIKIGVVVGSVLSGFFGYIVL.

The protein belongs to the NhaA Na(+)/H(+) (TC 2.A.33) antiporter family.

It localises to the cell inner membrane. It carries out the reaction Na(+)(in) + 2 H(+)(out) = Na(+)(out) + 2 H(+)(in). Its function is as follows. Na(+)/H(+) antiporter that extrudes sodium in exchange for external protons. This is Na(+)/H(+) antiporter NhaA from Francisella tularensis subsp. tularensis (strain WY96-3418).